Here is a 476-residue protein sequence, read N- to C-terminus: Adenosylhomocysteinase (476 aa).

Substrate-binding residues include Thr67, Asp142, and Glu202. 203–205 (TTT) serves as a coordination point for NAD(+). Substrate-binding residues include Lys232 and Asp236. NAD(+) is bound by residues Asn237, 266–271 (GYGDVG), Glu289, Asn324, 345–347 (IGH), and Asn390.

This sequence belongs to the adenosylhomocysteinase family. NAD(+) is required as a cofactor.

It localises to the cytoplasm. It catalyses the reaction S-adenosyl-L-homocysteine + H2O = L-homocysteine + adenosine. It participates in amino-acid biosynthesis; L-homocysteine biosynthesis; L-homocysteine from S-adenosyl-L-homocysteine: step 1/1. May play a key role in the regulation of the intracellular concentration of adenosylhomocysteine. The polypeptide is Adenosylhomocysteinase (Prochlorococcus marinus (strain SARG / CCMP1375 / SS120)).